A 282-amino-acid chain; its full sequence is PTS system sorbose-specific EIID component (282 aa).

A PTS EIID domain is found at 13-281 (TKITKGDMFK…GIVGYWLGIL (269 aa)). A run of 4 helical transmembrane segments spans residues 135 to 155 (LGAS…FVAF), 197 to 217 (GLFI…PLVV), 234 to 254 (ILDQ…CMYL), and 261 to 281 (PILL…LGIL).

It localises to the cell membrane. Its function is as follows. The phosphoenolpyruvate-dependent sugar phosphotransferase system (PTS), a major carbohydrate active transport system, catalyzes the phosphorylation of incoming sugar substrates concomitant with their translocation across the cell membrane. The enzyme II SorABCD PTS system is involved in L-sorbose transport. This chain is PTS system sorbose-specific EIID component, found in Lacticaseibacillus casei (Lactobacillus casei).